A 231-amino-acid polypeptide reads, in one-letter code: Probable septum site-determining protein MinC (231 aa).

The interval 101 to 125 (GKEKAPRPAPTPQAPAQNTTPVTKT) is disordered. The span at 114–123 (APAQNTTPVT) shows a compositional bias: low complexity.

Belongs to the MinC family. Interacts with MinD and FtsZ.

Functionally, cell division inhibitor that blocks the formation of polar Z ring septums. Rapidly oscillates between the poles of the cell to destabilize FtsZ filaments that have formed before they mature into polar Z rings. Prevents FtsZ polymerization. This is Probable septum site-determining protein MinC from Escherichia coli (strain ATCC 8739 / DSM 1576 / NBRC 3972 / NCIMB 8545 / WDCM 00012 / Crooks).